Reading from the N-terminus, the 564-residue chain is ATP-dependent RNA helicase DBP3 (564 aa).

The tract at residues 31 to 125 (TKQQTMSKDK…TNYTQSSKLS (95 aa)) is disordered. Basic and acidic residues predominate over residues 58–73 (ADSKKQRKLEKQEKKD). The span at 74 to 96 (KKDKKDKKEKKEKKEKKHKKEKK) shows a compositional bias: basic residues. Residues 112-125 (SSSSTNYTQSSKLS) are compositionally biased toward low complexity. The Q motif motif lies at 155–181 (LSFDQVQLTSAITSKLSKFDKPTPIQS). Residues 184–356 (WPFLLSGKDV…NNFMNSPVKV (173 aa)) enclose the Helicase ATP-binding domain. 197–204 (AETGSGKT) contributes to the ATP binding site. Positions 303–306 (DEAD) match the DEAD box motif. Residues 385–534 (KLIQLLRKYN…PVPEELLKFG (150 aa)) enclose the Helicase C-terminal domain.

Belongs to the DEAD box helicase family. DDX5/DBP2 subfamily.

The protein localises to the nucleus. Its subcellular location is the nucleolus. It catalyses the reaction ATP + H2O = ADP + phosphate + H(+). Its function is as follows. ATP-dependent RNA helicase required for 60S ribosomal subunit synthesis. Involved in efficient pre-rRNA processing, predominantly at site A3, which is necessary for the normal formation of 25S and 5.8S rRNAs. The sequence is that of ATP-dependent RNA helicase DBP3 (DBP3) from Candida albicans (strain SC5314 / ATCC MYA-2876) (Yeast).